Reading from the N-terminus, the 95-residue chain is Beta-defensin 132 (95 aa).

The first 22 residues, 1–22 (MKFLLLVLAALGFLTQVIPASG), serve as a signal peptide directing secretion. Cystine bridges form between C27/C55, C35/C49, and C39/C56. The segment at 72–95 (GNHWPSRSRNTQRKNKKQQTTVTP) is disordered.

The protein belongs to the beta-defensin family.

Its subcellular location is the secreted. Has antibacterial activity. This chain is Beta-defensin 132 (DEFB132), found in Macaca fascicularis (Crab-eating macaque).